A 478-amino-acid polypeptide reads, in one-letter code: Nuclear distribution protein PAC1 (478 aa).

The 33-residue stretch at 9–41 (QAEELHKAMIAYLLSANLPKSAAALREELADSV) folds into the LisH domain. Positions 60 to 87 (TSVVRLQKKIMDLESRNNALQSELDSAT) form a coiled coil. WD repeat units lie at residues 113–154 (SHRE…RTIK), 156–196 (HTKA…KNIR), 200–247 (GHDH…CVKT), 250–289 (GHVDWVRDVAASPDGRFLFSAGNDQVARLWDVSSGETKST), 292–352 (GHEH…IKTL), 354–393 (GHDNWVRALAFHPGGKYLLSVSDDKTLRCWDLTQECKCVR), 398–439 (AHGH…AASA), and 440–477 (INGVVPTGKKEDPGGGPMMGIRCVIATGSVDLKVRVFA).

It belongs to the WD repeat LIS1/nudF family. Self-associates. Interacts with NDL1 and dynein.

Its subcellular location is the cytoplasm. The protein localises to the cytoskeleton. It is found in the spindle pole. Functionally, positively regulates the activity of the minus-end directed microtubule motor protein dynein. May enhance dynein-mediated microtubule sliding by targeting dynein to the microtubule plus end. Required for nuclear migration during vegetative growth as well as development. Required for retrograde early endosome (EE) transport from the hyphal tip. Required for localization of dynein to the mitotic spindle poles. Recruits additional proteins to the dynein complex at SPBs. This chain is Nuclear distribution protein PAC1, found in Paracoccidioides brasiliensis (strain Pb18).